The sequence spans 41 residues: Cytochrome b559 subunit beta (41 aa).

Residues 16–32 (WLAVHALAIPTVFFLGS) form a helical membrane-spanning segment. A heme-binding site is contributed by H20.

Belongs to the PsbE/PsbF family. Heterodimer of an alpha subunit and a beta subunit. PSII is composed of 1 copy each of membrane proteins PsbA, PsbB, PsbC, PsbD, PsbE, PsbF, PsbH, PsbI, PsbJ, PsbK, PsbL, PsbM, PsbT, PsbY, PsbZ, Psb30/Ycf12, at least 3 peripheral proteins of the oxygen-evolving complex and a large number of cofactors. It forms dimeric complexes. Heme b serves as cofactor.

It is found in the plastid. The protein resides in the chloroplast thylakoid membrane. In terms of biological role, this b-type cytochrome is tightly associated with the reaction center of photosystem II (PSII). PSII is a light-driven water:plastoquinone oxidoreductase that uses light energy to abstract electrons from H(2)O, generating O(2) and a proton gradient subsequently used for ATP formation. It consists of a core antenna complex that captures photons, and an electron transfer chain that converts photonic excitation into a charge separation. The chain is Cytochrome b559 subunit beta from Euglena gracilis.